The sequence spans 339 residues: Cobalt-precorrin-5B C(1)-methyltransferase (339 aa).

This sequence belongs to the CbiD family.

The enzyme catalyses Co-precorrin-5B + S-adenosyl-L-methionine = Co-precorrin-6A + S-adenosyl-L-homocysteine. The protein operates within cofactor biosynthesis; adenosylcobalamin biosynthesis; cob(II)yrinate a,c-diamide from sirohydrochlorin (anaerobic route): step 6/10. In terms of biological role, catalyzes the methylation of C-1 in cobalt-precorrin-5B to form cobalt-precorrin-6A. This is Cobalt-precorrin-5B C(1)-methyltransferase from Methanosarcina acetivorans (strain ATCC 35395 / DSM 2834 / JCM 12185 / C2A).